Reading from the N-terminus, the 137-residue chain is Small ribosomal subunit protein uS11 (137 aa).

Residues 116–137 (EDVTPIPHDGTRRPGGKRGRRV) are disordered.

This sequence belongs to the universal ribosomal protein uS11 family. Part of the 30S ribosomal subunit.

Its function is as follows. Located on the platform of the 30S subunit. In Methanopyrus kandleri (strain AV19 / DSM 6324 / JCM 9639 / NBRC 100938), this protein is Small ribosomal subunit protein uS11.